The chain runs to 35 residues: Photosystem II reaction center protein T (35 aa).

The helical transmembrane segment at 3 to 23 (SVAYILILTLAIGVLFFAIAF) threads the bilayer.

Belongs to the PsbT family. In terms of assembly, PSII is composed of 1 copy each of membrane proteins PsbA, PsbB, PsbC, PsbD, PsbE, PsbF, PsbH, PsbI, PsbJ, PsbK, PsbL, PsbM, PsbT, PsbX, PsbY, PsbZ, Psb30/Ycf12, peripheral proteins PsbO, CyanoQ (PsbQ), PsbU, PsbV and a large number of cofactors. It forms dimeric complexes.

The protein resides in the cellular thylakoid membrane. Functionally, found at the monomer-monomer interface of the photosystem II (PS II) dimer, plays a role in assembly and dimerization of PSII. PSII is a light-driven water plastoquinone oxidoreductase, using light energy to abstract electrons from H(2)O, generating a proton gradient subsequently used for ATP formation. The sequence is that of Photosystem II reaction center protein T from Nostoc sp. (strain PCC 7120 / SAG 25.82 / UTEX 2576).